The primary structure comprises 515 residues: 1-pyrroline-5-carboxylate dehydrogenase (515 aa).

Active-site residues include Glu286 and Cys320.

It belongs to the aldehyde dehydrogenase family. RocA subfamily.

It catalyses the reaction L-glutamate 5-semialdehyde + NAD(+) + H2O = L-glutamate + NADH + 2 H(+). The protein operates within amino-acid degradation; L-proline degradation into L-glutamate; L-glutamate from L-proline: step 2/2. In Geobacillus thermodenitrificans (strain NG80-2), this protein is 1-pyrroline-5-carboxylate dehydrogenase.